Here is a 340-residue protein sequence, read N- to C-terminus: Phospho-N-acetylmuramoyl-pentapeptide-transferase (340 aa).

A run of 10 helical transmembrane segments spans residues 3–23 (MSLIAGVAAFVLTVLAMPHFI), 53–73 (GGTVFLVVAILISLIFNFHVF), 79–99 (AYGATAGILFVILIYGIIGFL), 119–139 (MALQIVAGLLFYFIHVLPSGT), 144–164 (IGGLTIQLGVFYVLFVLFWIV), 176–196 (IDGLASVSVVISLIAYGIIAF), 200–220 (ELAILTIIITMIGALLGFFVF), 227–247 (VFMGDVGSLSLGAMLAVISIA), 250–270 (VEWTLLLIGVVYVLETASVML), and 315–335 (VDAFLWTIGALASSITLWMVL).

The protein belongs to the glycosyltransferase 4 family. MraY subfamily. It depends on Mg(2+) as a cofactor.

The protein resides in the cell membrane. It catalyses the reaction UDP-N-acetyl-alpha-D-muramoyl-L-alanyl-gamma-D-glutamyl-L-lysyl-D-alanyl-D-alanine + di-trans,octa-cis-undecaprenyl phosphate = Mur2Ac(oyl-L-Ala-gamma-D-Glu-L-Lys-D-Ala-D-Ala)-di-trans,octa-cis-undecaprenyl diphosphate + UMP. It functions in the pathway cell wall biogenesis; peptidoglycan biosynthesis. Its function is as follows. Catalyzes the initial step of the lipid cycle reactions in the biosynthesis of the cell wall peptidoglycan: transfers peptidoglycan precursor phospho-MurNAc-pentapeptide from UDP-MurNAc-pentapeptide onto the lipid carrier undecaprenyl phosphate, yielding undecaprenyl-pyrophosphoryl-MurNAc-pentapeptide, known as lipid I. The protein is Phospho-N-acetylmuramoyl-pentapeptide-transferase of Streptococcus thermophilus (strain ATCC BAA-250 / LMG 18311).